Consider the following 518-residue polypeptide: Nuclear receptor ROR-gamma (518 aa).

Residues 1–30 (MDRAPQRQHQASRELLAAKKTHTSQIEVIP) form a modulating region. 2 NR C4-type zinc fingers span residues 31 to 51 (CKICGDKSSGIHYGVITCEGC) and 67 to 91 (CTRQQNCPIDRTSRNRCQHCRLQKC). A DNA-binding region (nuclear receptor) is located at residues 31–96 (CKICGDKSSG…RLQKCLALGM (66 aa)). Disordered regions lie at residues 105–183 (RMSK…SGSG) and 238–258 (HPGLGELGQGPDSYGSPSFRS). Residues 109–118 (KQRDSLHAEV) show a composition bias toward basic and acidic residues. Residues 119–130 (QKQLQQRQQQQQ) show a composition bias toward low complexity. In terms of domain architecture, NR LBD spans 269–508 (EIEHLVQSVC…PPLYKELFST (240 aa)). The AF-2 motif lies at 501–506 (LYKELF).

This sequence belongs to the nuclear hormone receptor family. NR1 subfamily. As to quaternary structure, interacts (via AF-2 motif) with the coactivators NCOA1, NCOA2 and PPARGC1A (via LXXLL motif). Interacts with the corepressor NCOR1. Interacts with CRY1. Interacts (via AF-2 motif) with PROX1. Interacts with FOXP3. Interacts with NR0B2.

It is found in the nucleus. Functionally, nuclear receptor that binds DNA as a monomer to ROR response elements (RORE) containing a single core motif half-site 5'-AGGTCA-3' preceded by a short A-T-rich sequence. Key regulator of cellular differentiation, immunity, peripheral circadian rhythm as well as lipid, steroid, xenobiotics and glucose metabolism. Considered to have intrinsic transcriptional activity, have some natural ligands like oxysterols that act as agonists (25-hydroxycholesterol) or inverse agonists (7-oxygenated sterols), enhancing or repressing the transcriptional activity, respectively. Recruits distinct combinations of cofactors to target gene regulatory regions to modulate their transcriptional expression, depending on the tissue, time and promoter contexts. Regulates the circadian expression of clock genes such as CRY1, BMAL1 and NR1D1 in peripheral tissues and in a tissue-selective manner. Competes with NR1D1 for binding to their shared DNA response element on some clock genes such as BMAL1, CRY1 and NR1D1 itself, resulting in NR1D1-mediated repression or RORC-mediated activation of the expression, leading to the circadian pattern of clock genes expression. Therefore influences the period length and stability of the clock. Involved in the regulation of the rhythmic expression of genes involved in glucose and lipid metabolism, including PLIN2 and AVPR1A. Negative regulator of adipocyte differentiation through the regulation of early phase genes expression, such as MMP3. Controls adipogenesis as well as adipocyte size and modulates insulin sensitivity in obesity. In liver, has specific and redundant functions with RORA as positive or negative modulator of expression of genes encoding phase I and Phase II proteins involved in the metabolism of lipids, steroids and xenobiotics, such as SULT1E1. Also plays a role in the regulation of hepatocyte glucose metabolism through the regulation of G6PC1 and PCK1. Essential for thymopoiesis and the development of several secondary lymphoid tissues, including lymph nodes and Peyer's patches. Required for the generation of LTi (lymphoid tissue inducer) cells. Regulates thymocyte survival through DNA-binding on ROREs of target gene promoter regions and recruitment of coactivaros via the AF-2. Also plays a key role, downstream of IL6 and TGFB and synergistically with RORA, for lineage specification of uncommitted CD4(+) T-helper (T(H)) cells into T(H)17 cells, antagonizing the T(H)1 program. Probably regulates IL17 and IL17F expression on T(H) by binding to the essential enhancer conserved non-coding sequence 2 (CNS2) in the IL17-IL17F locus. May also play a role in the pre-TCR activation cascade leading to the maturation of alpha/beta T-cells and may participate in the regulation of DNA accessibility in the TCR-J(alpha) locus. Regulates the rhythmic expression of PROX1 and promotes its nuclear localization. Plays an indispensable role in the induction of IFN-gamma dependent anti-mycobacterial systemic immunity. This is Nuclear receptor ROR-gamma (RORC) from Pongo abelii (Sumatran orangutan).